The following is a 222-amino-acid chain: N-(5'-phosphoribosyl)anthranilate isomerase (222 aa).

This sequence belongs to the TrpF family.

It carries out the reaction N-(5-phospho-beta-D-ribosyl)anthranilate = 1-(2-carboxyphenylamino)-1-deoxy-D-ribulose 5-phosphate. The protein operates within amino-acid biosynthesis; L-tryptophan biosynthesis; L-tryptophan from chorismate: step 3/5. The protein is N-(5'-phosphoribosyl)anthranilate isomerase of Brevibacillus brevis (strain 47 / JCM 6285 / NBRC 100599).